The sequence spans 429 residues: Glutamate-1-semialdehyde 2,1-aminomutase (429 aa).

At Lys272 the chain carries N6-(pyridoxal phosphate)lysine.

It belongs to the class-III pyridoxal-phosphate-dependent aminotransferase family. HemL subfamily. The cofactor is pyridoxal 5'-phosphate.

Its subcellular location is the cytoplasm. It carries out the reaction (S)-4-amino-5-oxopentanoate = 5-aminolevulinate. It participates in porphyrin-containing compound metabolism; protoporphyrin-IX biosynthesis; 5-aminolevulinate from L-glutamyl-tRNA(Glu): step 2/2. The protein is Glutamate-1-semialdehyde 2,1-aminomutase of Methanothrix thermoacetophila (strain DSM 6194 / JCM 14653 / NBRC 101360 / PT) (Methanosaeta thermophila).